The sequence spans 1111 residues: Protein NETWORKED 1C (1111 aa).

The NAB domain maps to 13 to 93 (YSWWWDSHNT…ERYNHATGVI (81 aa)). 3 coiled-coil regions span residues 202–287 (SESE…KESS), 314–605 (ERAS…LISE), and 642–752 (KTIG…LESK). The interval 850–870 (TGGGRSMRKQDGGSGRMRKQS) is disordered. The stretch at 943-1009 (NREVNKRRVL…EGEEAIEKLF (67 aa)) forms a coiled coil.

Belongs to the NET family.

Plant-specific actin binding protein. May be part of a membrane-cytoskeletal adapter complex. The protein is Protein NETWORKED 1C of Arabidopsis thaliana (Mouse-ear cress).